Here is a 393-residue protein sequence, read N- to C-terminus: Methylthioribose kinase (393 aa).

ATP is bound by residues Asn38, Lys53, and 107–109 (EDL). Position 225 (Asp225) interacts with substrate. 242-244 (DPE) is a binding site for ATP. Residue Arg332 participates in substrate binding.

The protein belongs to the methylthioribose kinase family. Homodimer.

The enzyme catalyses 5-(methylsulfanyl)-D-ribose + ATP = 5-(methylsulfanyl)-alpha-D-ribose 1-phosphate + ADP + H(+). Its pathway is amino-acid biosynthesis; L-methionine biosynthesis via salvage pathway; S-methyl-5-thio-alpha-D-ribose 1-phosphate from S-methyl-5'-thioadenosine (hydrolase route): step 2/2. Functionally, catalyzes the phosphorylation of methylthioribose into methylthioribose-1-phosphate. This is Methylthioribose kinase from Bacillus cereus (strain AH820).